Consider the following 348-residue polypeptide: GDSL esterase/lipase At4g30140 (348 aa).

Residues 1-28 (MVEGESKALWIILATVFAVAAVAPAVHG) form the signal peptide. The active-site Nucleophile is the S40. Residues D316 and H319 contribute to the active site. A glycan (N-linked (GlcNAc...) asparagine) is linked at N342.

This sequence belongs to the 'GDSL' lipolytic enzyme family.

The protein localises to the secreted. In Arabidopsis thaliana (Mouse-ear cress), this protein is GDSL esterase/lipase At4g30140.